The primary structure comprises 101 residues: Small ribosomal subunit protein uS14 (101 aa).

It belongs to the universal ribosomal protein uS14 family. As to quaternary structure, part of the 30S ribosomal subunit. Contacts proteins S3 and S10.

Its function is as follows. Binds 16S rRNA, required for the assembly of 30S particles and may also be responsible for determining the conformation of the 16S rRNA at the A site. In Acinetobacter baumannii (strain SDF), this protein is Small ribosomal subunit protein uS14.